The primary structure comprises 116 residues: Large ribosomal subunit protein bL20 (116 aa).

Belongs to the bacterial ribosomal protein bL20 family.

In terms of biological role, binds directly to 23S ribosomal RNA and is necessary for the in vitro assembly process of the 50S ribosomal subunit. It is not involved in the protein synthesizing functions of that subunit. The sequence is that of Large ribosomal subunit protein bL20 from Acaryochloris marina (strain MBIC 11017).